Consider the following 122-residue polypeptide: NADH-quinone oxidoreductase subunit A (122 aa).

The next 3 helical transmembrane spans lie at 10–30, 66–86, and 91–111; these read MIVL…LTLG, IFAL…PWAV, and LGLF…VGLA.

This sequence belongs to the complex I subunit 3 family. As to quaternary structure, NDH-1 is composed of 14 different subunits. Subunits NuoA, H, J, K, L, M, N constitute the membrane sector of the complex.

Its subcellular location is the cell membrane. The catalysed reaction is a quinone + NADH + 5 H(+)(in) = a quinol + NAD(+) + 4 H(+)(out). NDH-1 shuttles electrons from NADH, via FMN and iron-sulfur (Fe-S) centers, to quinones in the respiratory chain. The immediate electron acceptor for the enzyme in this species is believed to be a menaquinone. Couples the redox reaction to proton translocation (for every two electrons transferred, four hydrogen ions are translocated across the cytoplasmic membrane), and thus conserves the redox energy in a proton gradient. This is NADH-quinone oxidoreductase subunit A from Bacillus mycoides (strain KBAB4) (Bacillus weihenstephanensis).